We begin with the raw amino-acid sequence, 70 residues long: Putative membrane protein insertion efficiency factor (70 aa).

This sequence belongs to the UPF0161 family.

Its subcellular location is the cell membrane. In terms of biological role, could be involved in insertion of integral membrane proteins into the membrane. The sequence is that of Putative membrane protein insertion efficiency factor from Moorella thermoacetica (strain ATCC 39073 / JCM 9320).